The sequence spans 464 residues: MYYSNKMSKVITGKQYSWSELAKHNTENDCWVAVDGKVYDITRWVPLHPGGKEVLLLAAGRDVTNLFESYHPMSDKPTSILKNYEIGYISSYEHPKFVQKSDFYKTLKERVRKHFKATDQDPQMAVSIFSRLALVYLLVFVTYYLAHYTSNNFYLNCFLAIVYALCNSLFSMHMMHDSCHAAISHYPGVWKWMGASFDFVTGASFLSWCHQHVIGHHIYTNVRNADPDLGQGEVDFRIVTPFQTRSWYHKYQHIYAPLLYGIYTLKYRTQDWEAFVKDGKNGAIRVSVATNFDKAAYVIGKLSFVFFRFILPLRYHSFTDLICYFLIAEFVFGWYLTINFQVSHVAEDLKFFATPERPDEPSQINEDWAILQLKTTQDYGHGSLLCTFFSGSLNHQVVHHLFPSIAQDFYPQLVPIVKEVCKEHNITYHIKPNFTEAIMSHINYLYKMGNDPDYVKKPLASKDD.

Residues Gly13–Ser90 form the Cytochrome b5 heme-binding domain. Positions 48 and 71 each coordinate heme. 2 consecutive transmembrane segments (helical) span residues Ala125–Leu145 and Phe153–His173. A Histidine box-1 motif is present at residues His176–His180. The short motif at His212–His217 is the Histidine box-2 element. The chain crosses the membrane as a helical span at residues Phe318–Ile338. The Histidine box-3 signature appears at Gln396–His400.

The protein belongs to the fatty acid desaturase type 1 family. Requires Fe cation as cofactor.

It is found in the membrane. Specific for desaturation of the 5 position in C16 and C18 fatty acids. The polypeptide is Delta(5) fatty acid desaturase A (fadA) (Dictyostelium discoideum (Social amoeba)).